We begin with the raw amino-acid sequence, 186 residues long: Large ribosomal subunit protein uL15 (186 aa).

The interval 1–48 (MDLSSLRPAKGAVKARKRVGRGPGSGNGTTAGKGNKGQQSRSGYQRPV) is disordered. Residues 21-35 (RGPGSGNGTTAGKGN) show a composition bias toward gly residues.

This sequence belongs to the universal ribosomal protein uL15 family. Part of the 50S ribosomal subunit.

Its function is as follows. Binds to the 23S rRNA. The chain is Large ribosomal subunit protein uL15 from Chlorobaculum tepidum (strain ATCC 49652 / DSM 12025 / NBRC 103806 / TLS) (Chlorobium tepidum).